The following is a 556-amino-acid chain: 3-phosphoinositide-dependent protein kinase 1 (556 aa).

Tyr9 is subject to Phosphotyrosine; by SRC and INSR. Ser25 is modified (phosphoserine). The interval 26-80 is disordered; it reads PSMVRTQTESSTPPGIPGGSRQGPAMDGTAAEPRPGAGSLQHAQPPPQPRKKRPE. Residues 28–38 are compositionally biased toward polar residues; sequence MVRTQTESSTP. In terms of domain architecture, Protein kinase spans 82-342; it reads FKFGKILGEG…YGPLKAHPFF (261 aa). ATP is bound by residues 92–94 and Lys111; that span reads SFS. The segment at 113–157 is PIF-pocket; that stretch reads LEKRHIIKENKVPYVTRERDVMSRLDHPFFVKLYFTFQDDEKLYF. ATP is bound by residues 160 to 162 and Glu166; that span reads SYA. The active-site Proton acceptor is the Asp205. ATP contacts are provided by Glu209 and Asp223. Ser241 bears the Phosphoserine; by autocatalysis mark. Lys304 is subject to N6-acetyllysine. Thr354 is subject to Phosphothreonine; by MELK. A phosphotyrosine; by SRC and INSR mark is found at Tyr373 and Tyr376. Phosphoserine is present on Ser393. At Ser394 the chain carries Phosphoserine; by MAP3K5. Ser396 bears the Phosphoserine mark. The residue at position 398 (Ser398) is a Phosphoserine; by MAP3K5. Position 410 is a phosphoserine (Ser410). The PH domain maps to 459-550; that stretch reads KMGPVDKRKG…EVWRQRYQSH (92 aa). Residue Ser501 is modified to Phosphoserine; by PKC/PRKCQ. At Thr513 the chain carries Phosphothreonine; by autocatalysis. The residue at position 529 (Ser529) is a Phosphoserine; by PKC/PRKCQ.

This sequence belongs to the protein kinase superfamily. AGC Ser/Thr protein kinase family. PDPK1 subfamily. As to quaternary structure, homodimer in its autoinhibited state. Active as monomer. Interacts with NPRL2, PPARG, PAK1, PTK2B, GRB14, PKN1 (via C-terminus), STRAP and IKKB. The Tyr-9 phosphorylated form interacts with SRC, RASA1 and CRK (via their SH2 domains). Interacts with SGK3 in a phosphorylation-dependent manner. The tyrosine-phosphorylated form interacts with PTPN6. The Ser-241 phosphorylated form interacts with YWHAH and YWHAQ. Binds INSR in response to insulin. Interacts (via PH domain) with SMAD3, SMAD4 and SMAD7. Interacts with PKN2; the interaction stimulates PDPK1 autophosphorylation, its PI(3,4,5)P3-dependent kinase activity toward 'Ser-473' of AKT1 but also activates its kinase activity toward PRKCD and PRKCZ. In terms of processing, phosphorylation on Ser-241 in the activation loop is required for full activity. PDPK1 itself can autophosphorylate Ser-241, leading to its own activation. Autophosphorylation is inhibited by the apoptotic C-terminus cleavage product of PKN2. Tyr-9 phosphorylation is critical for stabilization of both PDPK1 and the PDPK1/SRC complex via HSP90-mediated protection of PDPK1 degradation. Angiotensin II stimulates the tyrosine phosphorylation of PDPK1 in vascular smooth muscle in a calcium- and SRC-dependent manner. Phosphorylated on Tyr-9, Tyr-373 and Tyr-376 by INSR in response to insulin. Palmitate negatively regulates autophosphorylation at Ser-241 and palmitate-induced phosphorylation at Ser-529 and Ser-501 by PKC/PRKCQ negatively regulates its ability to phosphorylate PKB/AKT1. Phosphorylation at Thr-354 by MELK partially inhibits kinase activity, the inhibition is cooperatively enhanced by phosphorylation at Ser-394 and Ser-398 by MAP3K5. Post-translationally, autophosphorylated; autophosphorylation is inhibited by the apoptotic C-terminus cleavage product of PKN2. Monoubiquitinated in the kinase domain, deubiquitinated by USP4. Appears to be expressed ubiquitously. The Tyr-9 phosphorylated form is markedly increased in diseased tissue compared with normal tissue from lung, liver, colon and breast.

The protein resides in the cytoplasm. The protein localises to the nucleus. It localises to the cell membrane. Its subcellular location is the cell junction. It is found in the focal adhesion. The catalysed reaction is L-seryl-[protein] + ATP = O-phospho-L-seryl-[protein] + ADP + H(+). It carries out the reaction L-threonyl-[protein] + ATP = O-phospho-L-threonyl-[protein] + ADP + H(+). Homodimerization regulates its activity by maintaining the kinase in an autoinhibitory conformation. NPRL2 down-regulates its activity by interfering with tyrosine phosphorylation at the Tyr-9, Tyr-373 and Tyr-376 residues. The 14-3-3 protein YWHAQ acts as a negative regulator by association with the residues surrounding the Ser-241 residue. STRAP positively regulates its activity by enhancing its autophosphorylation and by stimulating its dissociation from YWHAQ. SMAD2, SMAD3, SMAD4 and SMAD7 also positively regulate its activity by stimulating its dissociation from YWHAQ. Activated by phosphorylation on Tyr-9, Tyr-373 and Tyr-376 by INSR in response to insulin. Functionally, serine/threonine kinase which acts as a master kinase, phosphorylating and activating a subgroup of the AGC family of protein kinases. Its targets include: protein kinase B (PKB/AKT1, PKB/AKT2, PKB/AKT3), p70 ribosomal protein S6 kinase (RPS6KB1), p90 ribosomal protein S6 kinase (RPS6KA1, RPS6KA2 and RPS6KA3), cyclic AMP-dependent protein kinase (PRKACA), protein kinase C (PRKCD and PRKCZ), serum and glucocorticoid-inducible kinase (SGK1, SGK2 and SGK3), p21-activated kinase-1 (PAK1), TSSK3, protein kinase PKN (PKN1 and PKN2). Plays a central role in the transduction of signals from insulin by providing the activating phosphorylation to PKB/AKT1, thus propagating the signal to downstream targets controlling cell proliferation and survival, as well as glucose and amino acid uptake and storage. Negatively regulates the TGF-beta-induced signaling by: modulating the association of SMAD3 and SMAD7 with TGF-beta receptor, phosphorylating SMAD2, SMAD3, SMAD4 and SMAD7, preventing the nuclear translocation of SMAD3 and SMAD4 and the translocation of SMAD7 from the nucleus to the cytoplasm in response to TGF-beta. Activates PPARG transcriptional activity and promotes adipocyte differentiation. Activates the NF-kappa-B pathway via phosphorylation of IKKB. The tyrosine phosphorylated form is crucial for the regulation of focal adhesions by angiotensin II. Controls proliferation, survival, and growth of developing pancreatic cells. Participates in the regulation of Ca(2+) entry and Ca(2+)-activated K(+) channels of mast cells. Essential for the motility of vascular endothelial cells (ECs) and is involved in the regulation of their chemotaxis. Plays a critical role in cardiac homeostasis by serving as a dual effector for cell survival and beta-adrenergic response. Plays an important role during thymocyte development by regulating the expression of key nutrient receptors on the surface of pre-T cells and mediating Notch-induced cell growth and proliferative responses. Provides negative feedback inhibition to toll-like receptor-mediated NF-kappa-B activation in macrophages. Catalytically inactive. This is 3-phosphoinositide-dependent protein kinase 1 (PDPK1) from Homo sapiens (Human).